Consider the following 278-residue polypeptide: Probable CCR4-associated factor 1 homolog 5 (278 aa).

Positions 30, 32, 145, and 217 each coordinate a divalent metal cation.

The protein belongs to the CAF1 family. In terms of assembly, component of the CCR4-NOT complex, at least composed of CRR4 and CAF1 proteins. Requires a divalent metal cation as cofactor.

It localises to the nucleus. The protein resides in the cytoplasm. The catalysed reaction is Exonucleolytic cleavage of poly(A) to 5'-AMP.. Its function is as follows. Ubiquitous transcription factor required for a diverse set of processes. It is a component of the CCR4 complex involved in the control of gene expression. This chain is Probable CCR4-associated factor 1 homolog 5 (CAF1-5), found in Arabidopsis thaliana (Mouse-ear cress).